We begin with the raw amino-acid sequence, 90 residues long: Protein LURE 1.5 (90 aa).

The signal sequence occupies residues 1 to 19 (MKLPIIFLTLLIFVSSCTS). 2 disulfide bridges follow: Cys58/Cys75 and Cys61/Cys82.

The protein belongs to the DEFL family. As to expression, expressed in the pistil. Detected exclusively in the synergid cells.

It localises to the secreted. Its function is as follows. Inactive pollen tube attractants guiding pollen tubes to the ovular micropyle. This chain is Protein LURE 1.5, found in Arabidopsis thaliana (Mouse-ear cress).